A 368-amino-acid polypeptide reads, in one-letter code: MLYYLLHYFNSTYNPPGLGVVEYLTFRASAAAITSLLITLLAGPGFIRYLRSRFIEPVKEEAPAEHRKKKDLPTMGGLLIIFSIEVSVLLWSKFDDPHVWLIMLAVLWMGVVGFIDDYRKVVLKVKGGLSPRWKLVAQVALGLVVGIYTSLDPAFSVLMRETSVPFFKNLTIDYGYFYIPVVIFIITALSNAVNLTDGLDGLASGSSAIVVFALGGFAYLAGNAVYATYLSIPFIPGGGEIAVVCMAIVMASVGFLWFNSNPAEIFMGDTGSLALGSAIAVIALLIKQELLLPVLAGVFLLETLSVSVQVLYFKYTRMRFGQGRRIFLMAPLHHHFQLKGWAEQKIVIRFWIITILFFLTSLMTLKLR.

9 helical membrane-spanning segments follow: residues 30–50, 72–92, 98–118, 139–159, 170–190, 208–228, 238–258, 264–286, and 345–365; these read AAAI…IRYL, LPTM…LLWS, HVWL…IDDY, VALG…SVLM, LTID…TALS, AIVV…VYAT, GGEI…FLWF, EIFM…ALLI, and KIVI…LMTL.

This sequence belongs to the glycosyltransferase 4 family. MraY subfamily. Requires Mg(2+) as cofactor.

The protein resides in the cell inner membrane. It carries out the reaction UDP-N-acetyl-alpha-D-muramoyl-L-alanyl-gamma-D-glutamyl-meso-2,6-diaminopimeloyl-D-alanyl-D-alanine + di-trans,octa-cis-undecaprenyl phosphate = di-trans,octa-cis-undecaprenyl diphospho-N-acetyl-alpha-D-muramoyl-L-alanyl-D-glutamyl-meso-2,6-diaminopimeloyl-D-alanyl-D-alanine + UMP. Its pathway is cell wall biogenesis; peptidoglycan biosynthesis. Catalyzes the initial step of the lipid cycle reactions in the biosynthesis of the cell wall peptidoglycan: transfers peptidoglycan precursor phospho-MurNAc-pentapeptide from UDP-MurNAc-pentapeptide onto the lipid carrier undecaprenyl phosphate, yielding undecaprenyl-pyrophosphoryl-MurNAc-pentapeptide, known as lipid I. This Chlorobium luteolum (strain DSM 273 / BCRC 81028 / 2530) (Pelodictyon luteolum) protein is Phospho-N-acetylmuramoyl-pentapeptide-transferase.